The sequence spans 343 residues: D-beta-hydroxybutyrate dehydrogenase, mitochondrial (343 aa).

The transit peptide at 1 to 46 directs the protein to the mitochondrion; sequence MLAARLSRPLSQLPGKALSVRDRENGTRHTLLFYPASFSPDTRRTY. Residue 60–84 participates in NAD(+) binding; the sequence is ITGCDSGFGFSLAKHLHSKGFLVFA. N6-acetyllysine occurs at positions 73 and 97. Position 103 is an N6-acetyllysine; alternate (lysine 103). Lysine 103 is modified (N6-succinyllysine; alternate). Residues lysine 132 and lysine 177 each carry the N6-acetyllysine modification. Methionine 196 serves as a coordination point for substrate. Residue cysteine 209 is the Proton acceptor of the active site. Lysine 212 carries the post-translational modification N6-acetyllysine. An O-linked (GlcNAc) serine glycan is attached at serine 219. Position 246 is a phosphoserine (serine 246). N6-acetyllysine is present on lysine 258. Lysine 259 is subject to N6-acetyllysine; alternate. The residue at position 259 (lysine 259) is an N6-succinyllysine; alternate. Lysine 280 is subject to N6-acetyllysine.

Belongs to the short-chain dehydrogenases/reductases (SDR) family. Homotetramer. Acetylation of Lys-132 is observed in liver mitochondria from fasted mice but not from fed mice.

It localises to the mitochondrion inner membrane. Its subcellular location is the mitochondrion matrix. It catalyses the reaction (R)-3-hydroxybutanoate + NAD(+) = acetoacetate + NADH + H(+). Requires phosphatidylcholine as an allosteric activator for enzymatic activity. The chain is D-beta-hydroxybutyrate dehydrogenase, mitochondrial from Mus musculus (Mouse).